The following is a 318-amino-acid chain: Aspartate carbamoyltransferase catalytic subunit (318 aa).

Positions 58 and 59 each coordinate carbamoyl phosphate. Lys86 contacts L-aspartate. Residues Arg108, His141, and Gln144 each coordinate carbamoyl phosphate. The L-aspartate site is built by Arg174 and Arg226. The carbamoyl phosphate site is built by Gly270 and Pro271.

It belongs to the aspartate/ornithine carbamoyltransferase superfamily. ATCase family. Heterododecamer (2C3:3R2) of six catalytic PyrB chains organized as two trimers (C3), and six regulatory PyrI chains organized as three dimers (R2).

It catalyses the reaction carbamoyl phosphate + L-aspartate = N-carbamoyl-L-aspartate + phosphate + H(+). It functions in the pathway pyrimidine metabolism; UMP biosynthesis via de novo pathway; (S)-dihydroorotate from bicarbonate: step 2/3. Functionally, catalyzes the condensation of carbamoyl phosphate and aspartate to form carbamoyl aspartate and inorganic phosphate, the committed step in the de novo pyrimidine nucleotide biosynthesis pathway. This is Aspartate carbamoyltransferase catalytic subunit from Lactobacillus delbrueckii subsp. bulgaricus (strain ATCC 11842 / DSM 20081 / BCRC 10696 / JCM 1002 / NBRC 13953 / NCIMB 11778 / NCTC 12712 / WDCM 00102 / Lb 14).